We begin with the raw amino-acid sequence, 146 residues long: Hemoglobin subunit beta (146 aa).

N-acetylvaline is present on valine 1. The region spanning 2-146 (HLTAEEKSLV…VANALAHKYH (145 aa)) is the Globin domain. Serine 44 bears the Phosphoserine mark. N6-acetyllysine is present on lysine 59. Histidine 63 lines the heme b pocket. Residue lysine 82 is modified to N6-acetyllysine. Residue histidine 92 coordinates heme b. An S-nitrosocysteine modification is found at cysteine 93. Residue lysine 144 is modified to N6-acetyllysine.

It belongs to the globin family. In terms of assembly, heterotetramer of two alpha chains and two beta chains. In terms of tissue distribution, red blood cells.

In terms of biological role, involved in oxygen transport from the lung to the various peripheral tissues. This is Hemoglobin subunit beta (HBB) from Canis latrans (Coyote).